The primary structure comprises 914 residues: Protein translocase subunit SecA (914 aa).

ATP contacts are provided by residues Gln-87, 105–109 (GEGKT), and Asp-508. Zn(2+) is bound by residues Cys-898, Cys-900, Cys-909, and His-910.

This sequence belongs to the SecA family. Monomer and homodimer. Part of the essential Sec protein translocation apparatus which comprises SecA, SecYEG and auxiliary proteins SecDF-YajC and YidC. Zn(2+) is required as a cofactor.

It localises to the cell inner membrane. Its subcellular location is the cytoplasm. It carries out the reaction ATP + H2O + cellular proteinSide 1 = ADP + phosphate + cellular proteinSide 2.. Part of the Sec protein translocase complex. Interacts with the SecYEG preprotein conducting channel. Has a central role in coupling the hydrolysis of ATP to the transfer of proteins into and across the cell membrane, serving both as a receptor for the preprotein-SecB complex and as an ATP-driven molecular motor driving the stepwise translocation of polypeptide chains across the membrane. This is Protein translocase subunit SecA from Xylella fastidiosa (strain M12).